The following is a 297-amino-acid chain: GATA transcription factor 24 (297 aa).

A Tify domain is found at 73-108 (GIENGDQLTLSFQGQVYVFDRVSPEKVQAVLLLLGG). One can recognise a CCT domain in the interval 143 to 185 (RLASLLRFREKRKGRNFDKTIRYTVRKEVALRMQRKKGQFTSA). The tract at residues 178 to 203 (KKGQFTSAKSSNDDSGSTGSDWGSNQ) is disordered. Residues 190–201 (DDSGSTGSDWGS) are compositionally biased toward low complexity. The GATA-type zinc finger occupies 213–269 (QKPEVLCRHCGTSEKSTPMMRRGPDGPRTLCNACGLMWANKGTLRDLSKVPPPQTPQ).

This sequence belongs to the type IV zinc-finger family. Class C subfamily. In terms of tissue distribution, predominantly expressed in shoot apices, inflorescences and roots.

The protein localises to the nucleus. Its function is as follows. Transcriptional activator that specifically binds 5'-GATA-3' or 5'-GAT-3' motifs within gene promoters. The sequence is that of GATA transcription factor 24 (GATA24) from Arabidopsis thaliana (Mouse-ear cress).